A 569-amino-acid polypeptide reads, in one-letter code: Membrane protein insertase YidC (569 aa).

Transmembrane regions (helical) follow at residues 7-24, 219-239, 299-319, 340-360, 366-386, 436-456, 485-505, and 526-546; these read VLWV…DNYN, GSAL…PAIY, LYAV…TASM, FELV…FWLM, ILGN…LAFF, IGGC…YWVL, IGTF…SMFI, and PIAF…YWVV.

The protein belongs to the OXA1/ALB3/YidC family. Type 1 subfamily. Interacts with the Sec translocase complex via SecD. Specifically interacts with transmembrane segments of nascent integral membrane proteins during membrane integration.

The protein localises to the cell inner membrane. In terms of biological role, required for the insertion and/or proper folding and/or complex formation of integral membrane proteins into the membrane. Involved in integration of membrane proteins that insert both dependently and independently of the Sec translocase complex, as well as at least some lipoproteins. Aids folding of multispanning membrane proteins. In Herminiimonas arsenicoxydans, this protein is Membrane protein insertase YidC.